Here is a 231-residue protein sequence, read N- to C-terminus: 2-C-methyl-D-erythritol 4-phosphate cytidylyltransferase (231 aa).

It belongs to the IspD/TarI cytidylyltransferase family. IspD subfamily.

The catalysed reaction is 2-C-methyl-D-erythritol 4-phosphate + CTP + H(+) = 4-CDP-2-C-methyl-D-erythritol + diphosphate. Its pathway is isoprenoid biosynthesis; isopentenyl diphosphate biosynthesis via DXP pathway; isopentenyl diphosphate from 1-deoxy-D-xylulose 5-phosphate: step 2/6. Its function is as follows. Catalyzes the formation of 4-diphosphocytidyl-2-C-methyl-D-erythritol from CTP and 2-C-methyl-D-erythritol 4-phosphate (MEP). The protein is 2-C-methyl-D-erythritol 4-phosphate cytidylyltransferase of Xylella fastidiosa (strain 9a5c).